A 450-amino-acid polypeptide reads, in one-letter code: tRNA modification GTPase MnmE (450 aa).

(6S)-5-formyl-5,6,7,8-tetrahydrofolate contacts are provided by Arg-23, Glu-80, and Arg-123. The 154-residue stretch at 219 to 372 folds into the TrmE-type G domain; sequence GLHVVLAGQP…LRARLLQMAG (154 aa). Residue Asn-229 coordinates K(+). GTP is bound by residues 229-234, 248-254, and 273-276; these read NVGKSS, TPIAGTT, and DTAG. Ser-233 provides a ligand contact to Mg(2+). Positions 248, 250, and 253 each coordinate K(+). Thr-254 serves as a coordination point for Mg(2+). Lys-450 contributes to the (6S)-5-formyl-5,6,7,8-tetrahydrofolate binding site.

The protein belongs to the TRAFAC class TrmE-Era-EngA-EngB-Septin-like GTPase superfamily. TrmE GTPase family. Homodimer. Heterotetramer of two MnmE and two MnmG subunits. It depends on K(+) as a cofactor.

Its subcellular location is the cytoplasm. In terms of biological role, exhibits a very high intrinsic GTPase hydrolysis rate. Involved in the addition of a carboxymethylaminomethyl (cmnm) group at the wobble position (U34) of certain tRNAs, forming tRNA-cmnm(5)s(2)U34. In Bordetella avium (strain 197N), this protein is tRNA modification GTPase MnmE.